An 84-amino-acid polypeptide reads, in one-letter code: Small ribosomal subunit protein uS17 (84 aa).

Belongs to the universal ribosomal protein uS17 family. Part of the 30S ribosomal subunit.

Functionally, one of the primary rRNA binding proteins, it binds specifically to the 5'-end of 16S ribosomal RNA. This chain is Small ribosomal subunit protein uS17, found in Sodalis glossinidius (strain morsitans).